Reading from the N-terminus, the 413-residue chain is Arginine biosynthesis bifunctional protein ArgJ (413 aa).

Substrate contacts are provided by Thr163, Lys189, Thr200, Glu286, Asn408, and Thr413. The Nucleophile role is filled by Thr200.

This sequence belongs to the ArgJ family. Heterotetramer of two alpha and two beta chains.

It is found in the cytoplasm. It carries out the reaction N(2)-acetyl-L-ornithine + L-glutamate = N-acetyl-L-glutamate + L-ornithine. It catalyses the reaction L-glutamate + acetyl-CoA = N-acetyl-L-glutamate + CoA + H(+). It functions in the pathway amino-acid biosynthesis; L-arginine biosynthesis; L-ornithine and N-acetyl-L-glutamate from L-glutamate and N(2)-acetyl-L-ornithine (cyclic): step 1/1. The protein operates within amino-acid biosynthesis; L-arginine biosynthesis; N(2)-acetyl-L-ornithine from L-glutamate: step 1/4. Functionally, catalyzes two activities which are involved in the cyclic version of arginine biosynthesis: the synthesis of N-acetylglutamate from glutamate and acetyl-CoA as the acetyl donor, and of ornithine by transacetylation between N(2)-acetylornithine and glutamate. The sequence is that of Arginine biosynthesis bifunctional protein ArgJ from Staphylococcus aureus (strain COL).